The primary structure comprises 422 residues: UDP-N-acetylglucosamine 1-carboxyvinyltransferase (422 aa).

A phosphoenolpyruvate-binding site is contributed by lysine 22–asparagine 23. Residue arginine 94 participates in UDP-N-acetyl-alpha-D-glucosamine binding. Cysteine 118 (proton donor) is an active-site residue. Cysteine 118 is modified (2-(S-cysteinyl)pyruvic acid O-phosphothioketal). Residues arginine 123–leucine 127, aspartate 309, and isoleucine 331 each bind UDP-N-acetyl-alpha-D-glucosamine.

This sequence belongs to the EPSP synthase family. MurA subfamily.

It is found in the cytoplasm. It carries out the reaction phosphoenolpyruvate + UDP-N-acetyl-alpha-D-glucosamine = UDP-N-acetyl-3-O-(1-carboxyvinyl)-alpha-D-glucosamine + phosphate. It functions in the pathway cell wall biogenesis; peptidoglycan biosynthesis. Cell wall formation. Adds enolpyruvyl to UDP-N-acetylglucosamine. In Cereibacter sphaeroides (strain KD131 / KCTC 12085) (Rhodobacter sphaeroides), this protein is UDP-N-acetylglucosamine 1-carboxyvinyltransferase.